The chain runs to 340 residues: Adenosine kinase (340 aa).

The active site involves D292.

The protein belongs to the carbohydrate kinase PfkB family. Mg(2+) serves as cofactor.

It catalyses the reaction adenosine + ATP = AMP + ADP + H(+). It participates in purine metabolism; AMP biosynthesis via salvage pathway; AMP from adenosine: step 1/1. This is Adenosine kinase (ado1) from Schizosaccharomyces pombe (strain 972 / ATCC 24843) (Fission yeast).